The following is a 427-amino-acid chain: Histidine--tRNA ligase (427 aa).

This sequence belongs to the class-II aminoacyl-tRNA synthetase family. In terms of assembly, homodimer.

It is found in the cytoplasm. It catalyses the reaction tRNA(His) + L-histidine + ATP = L-histidyl-tRNA(His) + AMP + diphosphate + H(+). This Corynebacterium urealyticum (strain ATCC 43042 / DSM 7109) protein is Histidine--tRNA ligase.